The chain runs to 827 residues: Lon protease 2 (827 aa).

The segment at 1 to 22 (MSDEKKKGSAASAMPTAMAPPG) is disordered. The span at 9 to 21 (SAASAMPTAMAPP) shows a compositional bias: low complexity. A Lon N-terminal domain is found at 33-227 (LPILPLRNSV…LVLELLNRKR (195 aa)). 379-386 (GPPGVGKT) is an ATP binding site. The Lon proteolytic domain maps to 615–796 (TEVPGVATGL…DDVLKAALET (182 aa)). Catalysis depends on residues S702 and K745. The segment at 799 to 827 (VGVAGTPGGEPGKEAPLPKPAESAPEVRA) is disordered.

The protein belongs to the peptidase S16 family. In terms of assembly, homohexamer. Organized in a ring with a central cavity.

The protein localises to the cytoplasm. The enzyme catalyses Hydrolysis of proteins in presence of ATP.. Its function is as follows. ATP-dependent serine protease that mediates the selective degradation of mutant and abnormal proteins as well as certain short-lived regulatory proteins. Required for cellular homeostasis and for survival from DNA damage and developmental changes induced by stress. Degrades polypeptides processively to yield small peptide fragments that are 5 to 10 amino acids long. Binds to DNA in a double-stranded, site-specific manner. The polypeptide is Lon protease 2 (Myxococcus xanthus).